Consider the following 857-residue polypeptide: MAFPAPAFSLANLLNGSYGVDTPEDMERLRSEQREEAAAACRNYRPLPAVDVSESVTEDAHSLQTPDGAPAEAVSDEFVTYGAEDYLEKSDDELLVAFETMVKPMRIGQLWCPAFNKCSFISSIAMARALLLAPRTSHRTMKCFEDLVAAIYTKSDFYYSEECEADDVQMDISSRDVPGYSFEPWSRTSGFEPPPICEACDMIMYQCPCFDFNALKKPCAERTFADDYVIEGLDGVVDNATLLSNLGPFLVPVKCQYEKCPTPTIAIPPNLNRATDRVDINLVQSICDSTLPTHSNYDDSFHQVFVESADYSIDLDHVRLRQSDLIAKIPDSGHMIPVLNTGSGHKRVGTTKEVLTAIKKRNADVPELGDSVNLSRLSKAVAERFFISYINGNSLASSNFVNVVSNFHDYMEKWKSSGLSYDDLPDLHAENLQFYDHMIKSDVKPVVSDTLNIDRPVPATITYHKKSITSQFSPLFTALFERFQRCLRERIILPVGKISSLEMAGFDVKNKYCLEIDLSKFDKSQGEFHLLIQEHILNGLGCPAPITKWWCDFHRFSYIRDRRAGVGMPISFQRRTGDAFTYFGNTIVTMAEFAWCYDTDQFEKLLFSGDDSLGFSQLPPVGDSSKFTTLYNMEAKVMEPSVPYICSKFLLSDEFGNTFSVPDPLREVQRLGTKKIPYSDNDEFLFAHFMQFVDRLKFLDRMSQSCIDQLSIFFELKYKKSGEEAALMLGAFKKYTANFQSYKELYYSDRRQCELINSFCISEFRVERVNSNKQRKKHGIERRCNDKRRTPTGSYGGGEEAETKVSQTESTGTRSQKSQRESAFKSQTVPLPTVLSSGRSGTDRVIPPCERGEGTRA.

The region spanning 511–624 is the RdRp catalytic domain; it reads KYCLEIDLSK…FSQLPPVGDS (114 aa). A disordered region spans residues 775 to 857; sequence RKKHGIERRC…PCERGEGTRA (83 aa). 2 stretches are compositionally biased toward polar residues: residues 804–816 and 824–840; these read KVSQ…TRSQ and FKSQ…SGRS.

Belongs to the ssRNA positive-strand viruses RNA-directed RNA polymerase family. Interacts with replication protein 1a.

It catalyses the reaction RNA(n) + a ribonucleoside 5'-triphosphate = RNA(n+1) + diphosphate. Its function is as follows. RNA-dependent RNA polymerase which replicates the viral genome composed of 3 RNA segments, RNA1, RNA2 and RNA3. This chain is RNA-directed RNA polymerase 2a, found in Cucumber mosaic virus (strain B) (CMV).